The following is a 635-amino-acid chain: 5-aminolevulinate synthase, non-specific, mitochondrial (635 aa).

A mitochondrion-targeting transit peptide spans 1–56; sequence MEAVVRRCPFLARVSQAFLQKAGPSLLFYAQHCPKMMEAAPPAAARGLATSASRGQ. Positions 44 to 66 are enriched in low complexity; the sequence is AARGLATSASRGQQVEETPAAQP. Residues 44-94 are disordered; sequence AARGLATSASRGQQVEETPAAQPEAKKAKEVAQQNTDGSQPPAGHPPAAAV. 3 residues coordinate substrate: R212, S329, and K348. S381, H409, and T437 together coordinate pyridoxal 5'-phosphate. K440 is an active-site residue. N6-(pyridoxal phosphate)lysine is present on K440. 2 residues coordinate pyridoxal 5'-phosphate: T469 and T470. T557 contributes to the substrate binding site.

Belongs to the class-II pyridoxal-phosphate-dependent aminotransferase family. As to quaternary structure, homodimer. Pyridoxal 5'-phosphate serves as cofactor. In terms of tissue distribution, ubiquitous.

It is found in the mitochondrion inner membrane. The catalysed reaction is succinyl-CoA + glycine + H(+) = 5-aminolevulinate + CO2 + CoA. It functions in the pathway porphyrin-containing compound metabolism; protoporphyrin-IX biosynthesis; 5-aminolevulinate from glycine: step 1/1. Functionally, catalyzes the pyridoxal 5'-phosphate (PLP)-dependent condensation of succinyl-CoA and glycine to form aminolevulinic acid (ALA), with CoA and CO2 as by-products. This is 5-aminolevulinate synthase, non-specific, mitochondrial (ALAS1) from Gallus gallus (Chicken).